Consider the following 220-residue polypeptide: Aspartic protease inhibitor 4 (220 aa).

An N-terminal signal peptide occupies residues 1–23 (MMKCLFLLCLCLLPILVFSSTFT). The propeptide occupies 24–32 (SQNPINLPS). The short motif at 26-31 (NPINLP) is the Vacuolar targeting signal element. Residue Asn51 is glycosylated (N-linked (GlcNAc...) asparagine). Disulfide bonds link Cys80–Cys125 and Cys174–Cys185.

It belongs to the protease inhibitor I3 (leguminous Kunitz-type inhibitor) family. As to expression, tubers.

The protein localises to the vacuole. In terms of biological role, inhibits tightly cathepsin D (aspartic protease) and weakly trypsin (serine protease). May protect the plant by inhibiting proteases of invading organisms. The chain is Aspartic protease inhibitor 4 from Solanum tuberosum (Potato).